A 340-amino-acid polypeptide reads, in one-letter code: Melanin-concentrating hormone receptor 2 (340 aa).

Topologically, residues 1 to 39 (MNPFHASCWNTSAELLNKSWNKEFAYQTASVVDTVILPS) are extracellular. 2 N-linked (GlcNAc...) asparagine glycosylation sites follow: Asn-10 and Asn-17. The helical transmembrane segment at 40–60 (MIGIICSTGLVGNILIVFTII) threads the bilayer. Residues 61-69 (RSRKKTVPD) are Cytoplasmic-facing. Residues 70 to 90 (IYICNLAVADLVHIVGMPFLI) form a helical membrane-spanning segment. The Extracellular portion of the chain corresponds to 91-104 (HQWARGGEWVFGGP). Residues 105–129 (LCTIITSLDTCNQFACSAIMTVMSV) traverse the membrane as a helical segment. Over 130–154 (DRYFALVQPFRLTRWRTRYKTIRIN) the chain is Cytoplasmic. Residues 155-175 (LGLWAASFILALPVWVYSKVI) form a helical membrane-spanning segment. Topologically, residues 176–200 (KFKDGVESCAFDLTSPDDVLWYTLY) are extracellular. Residues 201–221 (LTITTFFFPLPLILVCYILIL) traverse the membrane as a helical segment. At 222–252 (CYTWEMYQQNKDARCCNPSVPKQRVMKLTKM) the chain is on the cytoplasmic side. The helical transmembrane segment at 253–273 (VLVLVVVFILSAAPYHVIQLV) threads the bilayer. Residues 274–288 (NLQMEQPTLAFYVGY) are Extracellular-facing. The chain crosses the membrane as a helical span at residues 289–309 (YLSICLSYASSSINPFLYILL). Topologically, residues 310-340 (SGNFQKRLPQIQRRATEKEINNMGNTLKSHF) are cytoplasmic.

This sequence belongs to the G-protein coupled receptor 1 family. Specifically expressed in the brain, with highest levels in cerebral cortex, hippocampus and amygdala. No expression detected in the cerebellum, thalamus or hypothalamus.

Its subcellular location is the cell membrane. Its function is as follows. Receptor for melanin-concentrating hormone, coupled to G proteins that activate phosphoinositide hydrolysis. The chain is Melanin-concentrating hormone receptor 2 (MCHR2) from Homo sapiens (Human).